The sequence spans 301 residues: B3 domain-containing protein At5g18090 (301 aa).

Residues 18–113 constitute a DNA-binding region (TF-B3 1); that stretch reads FFKILRSADL…CFTVDIYQID (96 aa). Disordered regions lie at residues 123–142 and 153–194; these read SATI…NNIY and SWSE…KMKV. Residues 133–142 show a composition bias toward basic and acidic residues; it reads NKREQRNNIY. The segment at residues 209 to 301 is a DNA-binding region (TF-B3 2); that stretch reads VPEFTLTIKK…PTEMLVRVSK (93 aa).

The protein localises to the nucleus. This Arabidopsis thaliana (Mouse-ear cress) protein is B3 domain-containing protein At5g18090.